The following is a 293-amino-acid chain: ATP synthase gamma chain (293 aa).

The protein belongs to the ATPase gamma chain family. In terms of assembly, F-type ATPases have 2 components, CF(1) - the catalytic core - and CF(0) - the membrane proton channel. CF(1) has five subunits: alpha(3), beta(3), gamma(1), delta(1), epsilon(1). CF(0) has three main subunits: a, b and c.

The protein resides in the cell inner membrane. Its function is as follows. Produces ATP from ADP in the presence of a proton gradient across the membrane. The gamma chain is believed to be important in regulating ATPase activity and the flow of protons through the CF(0) complex. The polypeptide is ATP synthase gamma chain (Sinorhizobium fredii (strain NBRC 101917 / NGR234)).